Consider the following 164-residue polypeptide: Phosphopantetheine adenylyltransferase (164 aa).

Serine 9 serves as a coordination point for substrate. ATP-binding positions include 9-10 (SF) and histidine 17. Residues lysine 41, valine 78, and arginine 92 each contribute to the substrate site. ATP-binding positions include 93–95 (GLR), glutamate 103, and 128–134 (VRTITAT).

The protein belongs to the bacterial CoaD family. Homohexamer. Requires Mg(2+) as cofactor.

The protein localises to the cytoplasm. It catalyses the reaction (R)-4'-phosphopantetheine + ATP + H(+) = 3'-dephospho-CoA + diphosphate. It participates in cofactor biosynthesis; coenzyme A biosynthesis; CoA from (R)-pantothenate: step 4/5. Its function is as follows. Reversibly transfers an adenylyl group from ATP to 4'-phosphopantetheine, yielding dephospho-CoA (dPCoA) and pyrophosphate. This chain is Phosphopantetheine adenylyltransferase, found in Brucella anthropi (strain ATCC 49188 / DSM 6882 / CCUG 24695 / JCM 21032 / LMG 3331 / NBRC 15819 / NCTC 12168 / Alc 37) (Ochrobactrum anthropi).